A 198-amino-acid chain; its full sequence is dITP/XTP pyrophosphatase (198 aa).

Residue 8–13 participates in substrate binding; that stretch reads TKNKGK. Aspartate 69 serves as the catalytic Proton acceptor. Aspartate 69 serves as a coordination point for Mg(2+). Substrate-binding positions include serine 70, 152–155, lysine 175, and 180–181; these read FGYD and HR.

This sequence belongs to the HAM1 NTPase family. In terms of assembly, homodimer. Requires Mg(2+) as cofactor.

It catalyses the reaction XTP + H2O = XMP + diphosphate + H(+). The catalysed reaction is dITP + H2O = dIMP + diphosphate + H(+). The enzyme catalyses ITP + H2O = IMP + diphosphate + H(+). Pyrophosphatase that catalyzes the hydrolysis of nucleoside triphosphates to their monophosphate derivatives, with a high preference for the non-canonical purine nucleotides XTP (xanthosine triphosphate), dITP (deoxyinosine triphosphate) and ITP. Seems to function as a house-cleaning enzyme that removes non-canonical purine nucleotides from the nucleotide pool, thus preventing their incorporation into DNA/RNA and avoiding chromosomal lesions. The protein is dITP/XTP pyrophosphatase of Shouchella clausii (strain KSM-K16) (Alkalihalobacillus clausii).